Reading from the N-terminus, the 312-residue chain is Cytochrome c biogenesis protein CcsA (312 aa).

A run of 8 helical transmembrane segments spans residues asparagine 12–phenylalanine 32, isoleucine 47–phenylalanine 67, leucine 72–phenylalanine 92, leucine 98–leucine 118, methionine 144–isoleucine 164, isoleucine 220–asparagine 240, threonine 254–isoleucine 271, and alanine 281–leucine 301.

Belongs to the CcmF/CycK/Ccl1/NrfE/CcsA family. In terms of assembly, may interact with Ccs1.

It localises to the plastid. Its subcellular location is the chloroplast thylakoid membrane. In terms of biological role, required during biogenesis of c-type cytochromes (cytochrome c6 and cytochrome f) at the step of heme attachment. This is Cytochrome c biogenesis protein CcsA from Trieres chinensis (Marine centric diatom).